We begin with the raw amino-acid sequence, 197 residues long: dITP/XTP pyrophosphatase (197 aa).

8 to 13 is a binding site for substrate; the sequence is TGNPGK. Positions 40 and 69 each coordinate Mg(2+). The Proton acceptor role is filled by Asp69. Substrate contacts are provided by residues Ser70, 154 to 157, Lys177, and 182 to 183; these read FGYD and HR.

It belongs to the HAM1 NTPase family. Homodimer. It depends on Mg(2+) as a cofactor.

It catalyses the reaction XTP + H2O = XMP + diphosphate + H(+). The catalysed reaction is dITP + H2O = dIMP + diphosphate + H(+). The enzyme catalyses ITP + H2O = IMP + diphosphate + H(+). Functionally, pyrophosphatase that catalyzes the hydrolysis of nucleoside triphosphates to their monophosphate derivatives, with a high preference for the non-canonical purine nucleotides XTP (xanthosine triphosphate), dITP (deoxyinosine triphosphate) and ITP. Seems to function as a house-cleaning enzyme that removes non-canonical purine nucleotides from the nucleotide pool, thus preventing their incorporation into DNA/RNA and avoiding chromosomal lesions. This is dITP/XTP pyrophosphatase from Yersinia pseudotuberculosis serotype I (strain IP32953).